The sequence spans 71 residues: GEECDCGSPANPCCDAATCKLRPGAQCADGLCCDQCRFIKKGTVCRPARGDWNDDTCTGQSADCPRNGLYG.

The Disintegrin domain maps to 1 to 71; that stretch reads GEECDCGSPA…ADCPRNGLYG (71 aa). 6 disulfide bridges follow: Cys4–Cys19, Cys6–Cys14, Cys13–Cys36, Cys27–Cys33, Cys32–Cys57, and Cys45–Cys64. Residues 49–51 carry the Cell attachment site motif; it reads RGD.

This sequence belongs to the venom metalloproteinase (M12B) family. P-II subfamily. P-IIa sub-subfamily. As to quaternary structure, monomer (disintegrin). Expressed by the venom gland.

Its subcellular location is the secreted. Its function is as follows. Inhibits ADP-induced platelet aggregation (IC(50) is 16.2 nM) by binding to alpha-IIb/beta-3 (ITGA2B/ITGB3). This chain is Disintegrin horridistatin-2, found in Crotalus horridus (Timber rattlesnake).